Reading from the N-terminus, the 500-residue chain is Glycogen synthase (500 aa).

Lys-15 contributes to the ADP-alpha-D-glucose binding site.

The protein belongs to the glycosyltransferase 1 family. Bacterial/plant glycogen synthase subfamily.

It carries out the reaction [(1-&gt;4)-alpha-D-glucosyl](n) + ADP-alpha-D-glucose = [(1-&gt;4)-alpha-D-glucosyl](n+1) + ADP + H(+). Its pathway is glycan biosynthesis; glycogen biosynthesis. In terms of biological role, synthesizes alpha-1,4-glucan chains using ADP-glucose. This chain is Glycogen synthase, found in Protochlamydia amoebophila (strain UWE25).